We begin with the raw amino-acid sequence, 273 residues long: Vacuolar iron transporter (273 aa).

The Cytoplasmic portion of the chain corresponds to Met1 to Thr47. A helical membrane pass occupies residues Ile48–Gly68. Residues Ala69–Gln75 lie on the Vacuolar side of the membrane. A helical transmembrane segment spans residues Val76–Tyr96. At Thr97–Lys181 the chain is on the cytoplasmic side. Residues Glu113, Glu116, Glu124, Glu127, Met161, and Glu165 each contribute to the Fe cation site. A helical membrane pass occupies residues Gly182–Ala202. At Tyr203–Tyr212 the chain is on the vacuolar side. The chain crosses the membrane as a helical span at residues Thr213–Phe233. Residues Lys234–Ala246 are Cytoplasmic-facing. A helical transmembrane segment spans residues Leu247–Leu267. The Vacuolar segment spans residues Lys268–Glu273.

This sequence belongs to the CCC1 family. In terms of assembly, monomer.

Its subcellular location is the vacuole membrane. The protein resides in the endoplasmic reticulum membrane. It localises to the cytoplasmic vesicle membrane. It catalyses the reaction Fe(2+)(in) = Fe(2+)(out). Functionally, vacuolar iron transporter involved in the transfer of iron ions from the cytosol to the vacuole for intracellular iron storage. Involved in detoxification of excess iron. The transport mechanism is not well defined and the role of protons is not clear. This is Vacuolar iron transporter from Plasmodium falciparum (isolate 3D7).